Reading from the N-terminus, the 226-residue chain is Glutathione S-transferase kappa 1 (226 aa).

16–18 (SPY) is a glutathione binding site. An N6-succinyllysine mark is found at lysine 36 and lysine 49. Residue asparagine 53 participates in glutathione binding. An N6-acetyllysine; alternate mark is found at lysine 68 and lysine 74. Lysine 68 and lysine 74 each carry N6-succinyllysine; alternate. Lysine 85 carries the post-translational modification N6-acetyllysine. Residues lysine 93 and lysine 116 each carry the N6-acetyllysine; alternate modification. An N6-succinyllysine; alternate mark is found at lysine 93 and lysine 116. At lysine 144 the chain carries N6-succinyllysine. The residue at position 158 (lysine 158) is an N6-acetyllysine; alternate. Position 158 is an N6-succinyllysine; alternate (lysine 158). Lysine 165 is subject to N6-acetyllysine. Lysine 167 and lysine 177 each carry N6-acetyllysine; alternate. Residues lysine 167 and lysine 177 each carry the N6-succinyllysine; alternate modification. Residue leucine 183 participates in glutathione binding. Lysine 193 is modified (N6-succinyllysine). A glutathione-binding site is contributed by 200-201 (SD).

This sequence belongs to the GST superfamily. Kappa family. Homodimer.

It localises to the mitochondrion matrix. It carries out the reaction RX + glutathione = an S-substituted glutathione + a halide anion + H(+). Glutathione S-transferase that catalyzes the conjugation of glutathione to exogenous and endogenous compounds. The sequence is that of Glutathione S-transferase kappa 1 (Gstk1) from Rattus norvegicus (Rat).